Consider the following 391-residue polypeptide: Tyrosinase-like protein phomQ2 (391 aa).

A disordered region spans residues 1–21; sequence MDNVGCEASSSRDPKGKKAVG. Residues 61–81 traverse the membrane as a helical segment; it reads IRGFICATIIFVVCLGALSYI. Residues Asn97 and Asn141 are each glycosylated (N-linked (GlcNAc...) asparagine). Residues His160 and His169 each coordinate Cu cation. N-linked (GlcNAc...) asparagine glycosylation is found at Asn204, Asn246, and Asn261. Cu cation contacts are provided by His298 and His324. Asn353 carries N-linked (GlcNAc...) asparagine glycosylation.

This sequence belongs to the tyrosinase family. It depends on Cu(2+) as a cofactor.

It is found in the membrane. It functions in the pathway mycotoxin biosynthesis. Its function is as follows. Tyrosinase-like protein; part of the gene cluster that mediates the biosynthesis of the phomopsins, a group of hexapeptide mycotoxins which infects lupins and causes lupinosis disease in livestock. Within the pathway, phomQ2 is involved in the generation of the common 13-membered macrocycle, possibly by catalyzing the hydroxylation of Tyr. The pathway starts with the processing of the precursor phomA by several endopeptidases including kexin proteases as well as the cluster-specific S41 family peptidase phomP1 and the oligopeptidase phomG to produce 10 identical copies of the hexapeptide Tyr-Val-Ile-Pro-Ile-Asp. After being excised from the precursor peptide, the core peptides are cyclized and modified post-translationally by enzymes encoded within the gene cluster. The timing and order of proteolysis of the phomA precursor and PTMs are still unknown. Two tyrosinase-like enzymes, phomQ1 and phomQ2, catalyze the chlorination and hydroxylation of Tyr, respectively. PhomYb, is proposed to be involved in the construction of the macrocyclic structure. The other 4 ustYa family proteins may be involved in PTMs that generate the unique structure of phomopsin A. PhomYa is required for the hydroxylation of C-beta of Tyr. PhomYc, phomYd, and phomYe are responsible for the biosynthesis of 2,3-dehydroisoleucine (dIle), 2,3-dehydroaspartic acid (dAsp), and 3,4-dehydroproline (dPro), respectively. While dIle formation by phomYc is indispensable for the installation of dAsp by phomYd, the order of the other PTMs have not been elucidated yet. Most of the biosynthetic enzymes likely have broad substrate specificity, and thus, there might be a metabolic grid from a precursor to phomopsin A. The enzyme(s) responsible for the biosynthesis of 3,4-dehydrovaline (dVal) have also not been identified yet. Finally, phomM acts as an S-adenosylmethionine-dependent alpha-N-methyltransferase that catalyzes two successive N-methylation reactions, converting N-desmethyl-phomopsin A to phomopsin A and phomopsin A further to an N,N-dimethylated congener called phomopsin E. The protein is Tyrosinase-like protein phomQ2 of Diaporthe leptostromiformis (Lupinosis disease fungus).